A 319-amino-acid chain; its full sequence is Cobalamin biosynthesis protein CbiB (319 aa).

The next 5 helical transmembrane spans lie at 56–76 (VMWIVVVGATWGMAWGVLALA), 82–102 (WLGWSVEVWMIFTVLAGRSLA), 153–173 (VDGIIAPLFFLFLGGAPLAMA), 204–224 (VANYLPARLSWLLLGIAAGLC), and 296–316 (LMWGASTLALALFIAARCWLS).

The protein belongs to the CobD/CbiB family.

The protein resides in the cell membrane. Its pathway is cofactor biosynthesis; adenosylcobalamin biosynthesis. Functionally, converts cobyric acid to cobinamide by the addition of aminopropanol on the F carboxylic group. However, the true cosubstrate could be (R)-1-amino-2-propanol O-2-phosphate, leading to cobinamide phosphate. The chain is Cobalamin biosynthesis protein CbiB from Salmonella arizonae (strain ATCC BAA-731 / CDC346-86 / RSK2980).